Reading from the N-terminus, the 154-residue chain is Small ribosomal subunit protein uS13 (154 aa).

It belongs to the universal ribosomal protein uS13 family.

The protein resides in the cytoplasm. Functionally, located at the top of the head of the 40S subunit, it contacts several helices of the 18S rRNA. The sequence is that of Small ribosomal subunit protein uS13 (rps18) from Dictyostelium discoideum (Social amoeba).